The following is a 510-amino-acid chain: MKIEKSQRNLEIDRSRKNDFLYPLIFREYIYTFAHDRDLNRSILLENVSYDNKYSLLIVKRLITRMYQQNHLIISANDSNQNTFFRYNKNLYFQMISEGFAVIVEIPFSLRLVSSLERSEIVKSHNLRSIHSIFPFLEGKFPHLNYLSEGLIPYPIHLEKLVQILRYWVKDPSSLHLLRLFLHEYWNLNSLIIPKKSISFFVKKNQRFFLFLYNSHVYEYESVFFFLCKQSFHFRLTFYQVFLERIDFYGKIEHFVEVFTKDWGDSLCLLKDPFIHYIRYQGKSIFVSKDTPLLMKKWKYYLVNLCQCHFDVCFQPQKIHINPFSLYKHSFALLGYLSSSSVRLNLSVVRSQMLENAFLMDNIMNKLDTTVSIIPLIGSLAKMKFCNAVGHPISKPTWADFSDSDIIDRFVRICRNLSHYYSGSSRKKSLYRIKYILRLSCVKTLARKHKSTVRIFLKRLGSELLEEFFTEEEQIIFLIFPRASSISQKLYRGRVWYLDIICINELSNHE.

This sequence belongs to the intron maturase 2 family. MatK subfamily.

It is found in the plastid. It localises to the chloroplast. Usually encoded in the trnK tRNA gene intron. Probably assists in splicing its own and other chloroplast group II introns. The chain is Maturase K from Populus nigra (Lombardy poplar).